Consider the following 529-residue polypeptide: Sodium/hydrogen exchanger 4 (529 aa).

At 1-19 (MSIGLTEFVTNKLAAEHPQ) the chain is on the cytoplasmic side. The helical transmembrane segment at 20–40 (VIPISVFIAILCLCLVIGHLL) threads the bilayer. Residues 41 to 45 (EENRW) lie on the Vacuolar side of the membrane. The helical transmembrane segment at 46-66 (VNESITAILVGAASGTVILLI) threads the bilayer. Topologically, residues 67–73 (SKGKSSH) are cytoplasmic. The segment at residues 74–94 (ILVFDEELFFIYLLPPIIFNA) is an intramembrane region (helical). Residues 95–112 (GFQVKKKKFFHNFLTIMS) lie on the Cytoplasmic side of the membrane. A helical membrane pass occupies residues 113-133 (FGVIGVFISTVIISFGTWWLF). At 134-171 (PKLGFKGLSARDYLAIGTIFSSTDTVCTLQILHQDETP) the chain is on the vacuolar side. Residues 172–192 (LLYSLVFGEGVVNDATSVVLF) traverse the membrane as a helical segment. At 193-214 (NAVQKIQFESLTGWTALQVFGN) the chain is on the cytoplasmic side. A helical membrane pass occupies residues 215 to 235 (FLYLFSTSTLLGIGVGLITSF). The Vacuolar portion of the chain corresponds to 236–250 (VLKTLYFGRHSTTRE). A helical transmembrane segment spans residues 251-267 (LAIMVLMAYLSYMLAEL). Residues 268 to 273 (FSLSGI) are Cytoplasmic-facing. The helical transmembrane segment at 274 to 291 (LTVFFCGVLMSHYASYNV) threads the bilayer. The Vacuolar portion of the chain corresponds to 292–301 (TESSRITSRH). The helical transmembrane segment at 302 to 322 (VFAMLSFIAETFIFLYVGTDA) threads the bilayer. Topologically, residues 323–342 (LDFTKWKTSSLSFGGTLGVS) are cytoplasmic. A helical membrane pass occupies residues 343 to 363 (GVITALVLLGRAAFVFPLSVL). The Vacuolar portion of the chain corresponds to 364–380 (TNFMNRHTERNESITFK). An N-linked (GlcNAc...) asparagine glycan is attached at Asn-374. The chain crosses the membrane as a helical span at residues 381–401 (HQVIIWWAGLMRGAVSIALAF). Topologically, residues 402–415 (KQFTYSGVTLDPVN) are cytoplasmic. A helical membrane pass occupies residues 416-436 (AAMVTNTTIVVLFTTLVFGFL). The Vacuolar segment spans residues 437-529 (TKPLVNYLLP…GPRRENQPEC (93 aa)).

The protein belongs to the monovalent cation:proton antiporter 1 (CPA1) transporter (TC 2.A.36) family. In terms of tissue distribution, expressed at very low levels in roots and shoots.

The protein localises to the vacuole membrane. It carries out the reaction Na(+)(in) + H(+)(out) = Na(+)(out) + H(+)(in). It catalyses the reaction K(+)(in) + H(+)(out) = K(+)(out) + H(+)(in). Its function is as follows. May act in low affinity electroneutral exchange of protons for cations such as Na(+) or K(+) across membranes. May also exchange Li(+) and Cs(+) with a lower affinity. This chain is Sodium/hydrogen exchanger 4 (NHX4), found in Arabidopsis thaliana (Mouse-ear cress).